A 158-amino-acid chain; its full sequence is Non-specific lipid transfer protein GPI-anchored 29 (158 aa).

The signal sequence occupies residues 1–24; sequence MAYFSTATSLLLLVLSVSSPYVHG. Disulfide bonds link C28-C71, C38-C55, C56-C95, and C69-C105. Residue N84 is glycosylated (N-linked (GlcNAc...) asparagine). A lipid anchor (GPI-anchor amidated serine) is attached at S134. Positions 135–158 are cleaved as a propeptide — removed in mature form; it reads KGNSLIPISGFSFVIVTALAMFRI.

The protein belongs to the plant LTP family. As to expression, confined to the ovaries of the inflorescence.

The protein localises to the secreted. Its subcellular location is the cell membrane. Its function is as follows. Probable lipid transfer protein. This Arabidopsis thaliana (Mouse-ear cress) protein is Non-specific lipid transfer protein GPI-anchored 29.